Consider the following 102-residue polypeptide: Small ribosomal subunit protein uS10 (102 aa).

The tract at residues arginine 33–alanine 59 is disordered.

This sequence belongs to the universal ribosomal protein uS10 family. Part of the 30S ribosomal subunit.

Functionally, involved in the binding of tRNA to the ribosomes. The sequence is that of Small ribosomal subunit protein uS10 from Pyrococcus furiosus (strain ATCC 43587 / DSM 3638 / JCM 8422 / Vc1).